Consider the following 302-residue polypeptide: Probable alpha-L-glutamate ligase (302 aa).

An ATP-grasp domain is found at 104–287; the sequence is LQLLSRKGLG…IAGQIIEYIE (184 aa). Residues Lys141, 178–179, Asp187, and 211–213 each bind ATP; these read EY and RSN. 3 residues coordinate Mg(2+): Asp248, Glu260, and Asn262. Mn(2+) is bound by residues Asp248, Glu260, and Asn262.

Belongs to the RimK family. It depends on Mg(2+) as a cofactor. Requires Mn(2+) as cofactor.

The polypeptide is Probable alpha-L-glutamate ligase (Chromohalobacter salexigens (strain ATCC BAA-138 / DSM 3043 / CIP 106854 / NCIMB 13768 / 1H11)).